The primary structure comprises 446 residues: MSILARDRNIAVIGLGKTGLSCADYLTRRGYGFCVMDTRENPSGLAELNAINPDVPVVTGKLDQDMLARAAEIWLSPGVPLSHPDLQAVKGQVKICGDVDVFSREANAPILAITGSNGKSTVTTLVGEMAKACGVNVAVGGNLGTPVLDLLADEVELYVVELSSFQLETTDRLGALAATVLNLSEDHMDRYADMMAYHLAKLRVFYGCRRQVLNRDDALAQPPLSREAEITWFTLKTPEPGQYGVLEEKDGAWLAYGAEKLLPVEQMRIRGKHNWSNALAALALADAAGLEREPCLQALREFTGLTHRCEWVADKDGVAYINDSKATNVGATQAALAGLGPVTSGGIVLICGGQGKGQDFTPLAPAVKEWVSTLIIIGEDGPKLKEALAGGVMALSAETMEEAVKLAAEKSSPGDLVLLSPACASFDMFKNYEDRGDQFKQWVRAL.

Residue 115 to 121 (GSNGKST) participates in ATP binding.

The protein belongs to the MurCDEF family.

The protein localises to the cytoplasm. It catalyses the reaction UDP-N-acetyl-alpha-D-muramoyl-L-alanine + D-glutamate + ATP = UDP-N-acetyl-alpha-D-muramoyl-L-alanyl-D-glutamate + ADP + phosphate + H(+). Its pathway is cell wall biogenesis; peptidoglycan biosynthesis. Cell wall formation. Catalyzes the addition of glutamate to the nucleotide precursor UDP-N-acetylmuramoyl-L-alanine (UMA). This is UDP-N-acetylmuramoylalanine--D-glutamate ligase from Hahella chejuensis (strain KCTC 2396).